A 107-amino-acid chain; its full sequence is Integration host factor subunit beta (107 aa).

Basic and acidic residues predominate over residues 82–101; that stretch reads PGKELRERVDRRAGEPLKAE. Positions 82-107 are disordered; it reads PGKELRERVDRRAGEPLKAEDPDDDL.

The protein belongs to the bacterial histone-like protein family. Heterodimer of an alpha and a beta chain.

This protein is one of the two subunits of integration host factor, a specific DNA-binding protein that functions in genetic recombination as well as in transcriptional and translational control. This chain is Integration host factor subunit beta, found in Paraburkholderia xenovorans (strain LB400).